A 417-amino-acid polypeptide reads, in one-letter code: Gamma-glutamyl phosphate reductase (417 aa).

The protein belongs to the gamma-glutamyl phosphate reductase family.

Its subcellular location is the cytoplasm. The catalysed reaction is L-glutamate 5-semialdehyde + phosphate + NADP(+) = L-glutamyl 5-phosphate + NADPH + H(+). It functions in the pathway amino-acid biosynthesis; L-proline biosynthesis; L-glutamate 5-semialdehyde from L-glutamate: step 2/2. In terms of biological role, catalyzes the NADPH-dependent reduction of L-glutamate 5-phosphate into L-glutamate 5-semialdehyde and phosphate. The product spontaneously undergoes cyclization to form 1-pyrroline-5-carboxylate. In Pectobacterium carotovorum subsp. carotovorum (strain PC1), this protein is Gamma-glutamyl phosphate reductase.